The sequence spans 651 residues: Sodium/potassium/calcium exchanger 2 (651 aa).

Residues 1–38 (MALCKKTVGSVLEEWCLNEPLFGCKRHQNVRKKLRLIR) lie on the Cytoplasmic side of the membrane. A helical membrane pass occupies residues 39–59 (IIGLLVSVVAISTFSLSISAF). Over 60-134 (FKMETHSTVL…DLFSLEERRK (75 aa)) the chain is Extracellular. Residues 92 to 123 (QNEGSTPDSPTSMKHEAEHDNATEEHSKGEYP) are disordered. Residues 93–103 (NEGSTPDSPTS) show a composition bias toward polar residues. The segment covering 104–122 (MKHEAEHDNATEEHSKGEY) has biased composition (basic and acidic residues). Residue Asn112 is glycosylated (N-linked (GlcNAc...) asparagine). A helical transmembrane segment spans residues 135-155 (GAVILHVIGMIYMFIALAIVC). Residues 156-179 (DEFFVPSLTVITEKLSISDDVAGA) lie on the Cytoplasmic side of the membrane. An Alpha-1 repeat occupies 176–216 (VAGATFMAAGGSAPELFTSLIGVFISHSNVGIGTIVGSAVF). Residues 180–200 (TFMAAGGSAPELFTSLIGVFI) form a helical membrane-spanning segment. Over 201–206 (SHSNVG) the chain is Extracellular. The helical transmembrane segment at 207-227 (IGTIVGSAVFNILFVIGMCAL) threads the bilayer. Topologically, residues 228–245 (FSREILNLTWWPLFRDVS) are cytoplasmic. Residues 246 to 266 (FYIVDLILLIIFFLDNLIMWW) traverse the membrane as a helical segment. The Extracellular segment spans residues 267 to 459 (ESLTLLTAYF…SLAWPDTPRK (193 aa)). Over residues 304 to 322 (ATTGDAEGKSPTAGDKDDQ) the composition is skewed to basic and acidic residues. The interval 304 to 338 (ATTGDAEGKSPTAGDKDDQTLTTKPRLQRGGSSAS) is disordered. A compositionally biased stretch (polar residues) spans 323–338 (TLTTKPRLQRGGSSAS). Residues 460–480 (QLTYLLVLPIVFPLWVSLPDV) traverse the membrane as a helical segment. Topologically, residues 481 to 487 (RNPRSRK) are cytoplasmic. A helical membrane pass occupies residues 488–508 (FFPITFFGSISWIAFFSYLMV). The Extracellular portion of the chain corresponds to 509-523 (WWAHQVGETIGISEE). The chain crosses the membrane as a helical span at residues 524–544 (IMGLTILAAGTSIPDLITSVI). The stretch at 531–562 (AAGTSIPDLITSVIVARKGLGDMAVSSSVGSN) is one Alpha-2 repeat. The Cytoplasmic portion of the chain corresponds to 545–562 (VARKGLGDMAVSSSVGSN). A helical transmembrane segment spans residues 563–583 (IFDITVGLPLPWLLYAVINNF). Residues 584–592 (SPVTVSSNG) are Extracellular-facing. The helical transmembrane segment at 593 to 613 (LFCAIVLLFIMLLFVILSIAF) threads the bilayer. Topologically, residues 614-620 (CKWRMNK) are cytoplasmic. The chain crosses the membrane as a helical span at residues 621 to 641 (FLGFLMFGLYFVFLIVSVLLE). Residues 642–651 (DKVIQCPVSI) lie on the Extracellular side of the membrane.

Belongs to the Ca(2+):cation antiporter (CaCA) (TC 2.A.19) family. SLC24A subfamily. In terms of tissue distribution, retinal cones. Found in the cone inner segment layer and in a subpopulation of ganglion cells.

It localises to the cell membrane. It carries out the reaction Ca(2+)(out) + K(+)(out) + 4 Na(+)(in) = Ca(2+)(in) + K(+)(in) + 4 Na(+)(out). Calcium, potassium:sodium antiporter that transports 1 Ca(2+) and 1 K(+) in exchange for 4 Na(+). Required for learming and memory by regulating neuronal Ca(2+), which is essential for the development of synaptic plasticity. The chain is Sodium/potassium/calcium exchanger 2 (SLC24A2) from Gallus gallus (Chicken).